The primary structure comprises 78 residues: MSRVCQVTGKRPVTGNNVSHAMNHTRRRFLPNLQNHRFWVESEKRFVKLRVSTKGMRIIDKKGIDAVLADLRARGEKV.

It belongs to the bacterial ribosomal protein bL28 family.

The polypeptide is Large ribosomal subunit protein bL28 (Marinobacter nauticus (strain ATCC 700491 / DSM 11845 / VT8) (Marinobacter aquaeolei)).